An 876-amino-acid chain; its full sequence is Inter-alpha-trypsin inhibitor heavy chain H3 (876 aa).

Positions methionine 1 to glycine 18 are cleaved as a signal peptide. The propeptide occupies phenylalanine 19–serine 31. A VIT domain is found at leucine 26 to glutamate 155. N-linked (GlcNAc...) asparagine glycosylation occurs at asparagine 88. The 184-residue stretch at asparagine 281–valine 464 folds into the VWFA domain. Residue asparagine 577 is glycosylated (N-linked (GlcNAc...) asparagine). The residue at position 637 (aspartate 637) is an Aspartate 1-(chondroitin 4-sulfate)-ester. Positions proline 638–phenylalanine 876 are excised as a propeptide.

It belongs to the ITIH family. As to quaternary structure, I-alpha-I plasma protease inhibitors are assembled from one or two heavy chains (HC) and one light chain, bikunin. Pre-alpha-inhibitor (P-alpha-I) is composed of ITIH3/HC3 and bikunin. In terms of processing, heavy chains are linked to bikunin via chondroitin 4-sulfate esterified to the alpha-carboxyl of the C-terminal aspartate after propeptide cleavage.

The protein localises to the secreted. Its function is as follows. May act as a carrier of hyaluronan in serum or as a binding protein between hyaluronan and other matrix protein, including those on cell surfaces in tissues to regulate the localization, synthesis and degradation of hyaluronan which are essential to cells undergoing biological processes. The sequence is that of Inter-alpha-trypsin inhibitor heavy chain H3 (ITIH3) from Pongo abelii (Sumatran orangutan).